A 215-amino-acid chain; its full sequence is Large ribosomal subunit protein bL25 (215 aa).

The tract at residues 174–215 (ETVVTVQPPATEKEEETEAAVTDSEPEVINEKEEPAEEAKEE) is disordered. Residues 186–215 (KEEETEAAVTDSEPEVINEKEEPAEEAKEE) show a composition bias toward acidic residues.

It belongs to the bacterial ribosomal protein bL25 family. CTC subfamily. Part of the 50S ribosomal subunit; part of the 5S rRNA/L5/L18/L25 subcomplex. Contacts the 5S rRNA. Binds to the 5S rRNA independently of L5 and L18.

Functionally, this is one of the proteins that binds to the 5S RNA in the ribosome where it forms part of the central protuberance. This Halalkalibacterium halodurans (strain ATCC BAA-125 / DSM 18197 / FERM 7344 / JCM 9153 / C-125) (Bacillus halodurans) protein is Large ribosomal subunit protein bL25.